A 337-amino-acid chain; its full sequence is 2-oxoglutarate receptor 1 (337 aa).

The Extracellular portion of the chain corresponds to 1 to 34; sequence MNEPLDYLANASDFPDYAAAFGNCTDENIPLKMH. 2 N-linked (GlcNAc...) asparagine glycosylation sites follow: asparagine 10 and asparagine 23. A helical transmembrane segment spans residues 35 to 55; that stretch reads YLPVIYGIIFLVGFPGNAVVI. Over 56 to 69 the chain is Cytoplasmic; sequence STYIFKMRPWKSST. A helical membrane pass occupies residues 70 to 90; the sequence is IIMLNLACTDLLYLTSLPFLI. At 91–116 the chain is on the extracellular side; the sequence is HYYASGENWIFGDFMCKFIRFSFHFN. Cysteines 106 and 183 form a disulfide. A helical transmembrane segment spans residues 117-137; sequence LYSSILFLTCFSIFRYCVIIH. At 138–151 the chain is on the cytoplasmic side; that stretch reads PMSCFSIHKTRCAV. A helical transmembrane segment spans residues 152–172; sequence VACAVVWIISLVAVIPMTFLI. Topologically, residues 173–201 are extracellular; it reads TSTNRTNRSACLDLTSSDELNTIKWYNLI. Residues asparagine 176 and asparagine 179 are each glycosylated (N-linked (GlcNAc...) asparagine). Residues 202–222 traverse the membrane as a helical segment; sequence LTATTFCLPLVIVTLCYTTII. Residues 223–242 lie on the Cytoplasmic side of the membrane; it reads HTLTHGLQTDSCLKQKARRL. Residues 243–263 form a helical membrane-spanning segment; the sequence is TILLLLAFYVCFLPFHILRVI. Residues 264-284 are Extracellular-facing; the sequence is RIESRLLSISCSIENQIHEAY. A helical transmembrane segment spans residues 285–305; the sequence is IVSRPLAALNTFGNLLLYVVV. At 306–337 the chain is on the cytoplasmic side; it reads SDNFQQAVCSTVRCKVSGNLEQAKKISYSNNP.

The protein belongs to the G-protein coupled receptor 1 family. As to expression, detected in kidney and, to a lower extent, in placenta. Not detected in brain tissues including the frontal cortex, caudate putamen, thalamus, hypothalamus, hippocampus or pons.

It is found in the cell membrane. G protein-coupled receptor for dicarboxylates and amino dicarboxylates. Receptor for itaconate, a metabolite produced by myeloid lineages. In the respiratory epithelium, couples the binding of itaconate to the activation of GNA11 and downstream intracellular Ca(2+) release, leading to mucocilliary clearance of airborne pathogens. Receptor for leukotriene E4 (LTE4) produced by mast cells upon allergic inflammation. Binds with high affinity to LTE4 and elicits mucin release from pulmonary epithelium in response to airborne fungi allergens. Regulates mucin-producing goblet cell homeostasis. Receptor for alpha-ketoglutarate produced by proximal tubule renal cells upon metabolic alkalosis. In an intrarenal paracrine signaling pathway, binds alpha-ketoglutarate and drives transepithelial salt reabsorption and bicarbonate secretion by SLC26A4/pendrin-positive intercalated cells. This Homo sapiens (Human) protein is 2-oxoglutarate receptor 1 (OXGR1).